Reading from the N-terminus, the 209-residue chain is Ubiquitin-conjugating enzyme E2 S (209 aa).

The 147-residue stretch at 14–160 folds into the UBC core domain; that stretch reads QTIRQVMREL…ARMMTEIHAQ (147 aa). Residue Cys98 is the Glycyl thioester intermediate of the active site. Positions 164 to 209 are disordered; the sequence is CGVGASGDAKDDDGPSTKKHAGLDKKLQDKKKEKLLKEKKRMLKRL. Positions 171-199 are enriched in basic and acidic residues; that stretch reads DAKDDDGPSTKKHAGLDKKLQDKKKEKLL. Residues 200–209 show a composition bias toward basic residues; sequence KEKKRMLKRL.

The protein belongs to the ubiquitin-conjugating enzyme family.

The catalysed reaction is S-ubiquitinyl-[E1 ubiquitin-activating enzyme]-L-cysteine + [E2 ubiquitin-conjugating enzyme]-L-cysteine = [E1 ubiquitin-activating enzyme]-L-cysteine + S-ubiquitinyl-[E2 ubiquitin-conjugating enzyme]-L-cysteine.. Its pathway is protein modification; protein ubiquitination. Functionally, catalyzes the covalent attachment of ubiquitin to other proteins. Acts as an essential factor of the anaphase promoting complex/cyclosome (APC/C), a cell cycle-regulated ubiquitin ligase that controls progression through mitosis. Acts by specifically elongating polyubiquitin chains initiated by the E2 enzyme vih/UbcH10 on APC/C substrates, enhancing the degradation of APC/C substrates by the proteasome and promoting mitotic exit. This Drosophila yakuba (Fruit fly) protein is Ubiquitin-conjugating enzyme E2 S.